A 723-amino-acid polypeptide reads, in one-letter code: ATP-dependent zinc metalloprotease YME1 homolog (723 aa).

Residues 198–220 (LTRFYIFLVFCIFFGYLTGRIRV) traverse the membrane as a helical segment. 288–295 (GPPGTGKT) contributes to the ATP binding site. His509 serves as a coordination point for Zn(2+). Glu510 is an active-site residue. Residues His513 and Asp587 each contribute to the Zn(2+) site.

This sequence in the N-terminal section; belongs to the AAA ATPase family. In the C-terminal section; belongs to the peptidase M41 family. It depends on Zn(2+) as a cofactor.

The protein resides in the mitochondrion inner membrane. The protein localises to the mitochondrion. Functionally, ATP-dependent metalloprotease that catalyzes the degradation of folded and unfolded proteins with a suitable degron sequence in the mitochondrial intermembrane region. Plays an important role in regulating mitochondrial morphology and function. This Caenorhabditis elegans protein is ATP-dependent zinc metalloprotease YME1 homolog (ymel-1).